Consider the following 454-residue polypeptide: UDP-N-acetylmuramoylalanine--D-glutamate ligase (454 aa).

119-125 contributes to the ATP binding site; sequence GSNGKTT.

This sequence belongs to the MurCDEF family.

Its subcellular location is the cytoplasm. It carries out the reaction UDP-N-acetyl-alpha-D-muramoyl-L-alanine + D-glutamate + ATP = UDP-N-acetyl-alpha-D-muramoyl-L-alanyl-D-glutamate + ADP + phosphate + H(+). It functions in the pathway cell wall biogenesis; peptidoglycan biosynthesis. Functionally, cell wall formation. Catalyzes the addition of glutamate to the nucleotide precursor UDP-N-acetylmuramoyl-L-alanine (UMA). The polypeptide is UDP-N-acetylmuramoylalanine--D-glutamate ligase (Latilactobacillus sakei subsp. sakei (strain 23K) (Lactobacillus sakei subsp. sakei)).